The primary structure comprises 561 residues: Cytochrome P450 monooxygenase avaL (561 aa).

A helical membrane pass occupies residues 19-39 (IAASCALVCIVSACYVVWSLL). Cysteine 508 contacts heme.

It belongs to the cytochrome P450 family. Requires heme as cofactor.

The protein resides in the membrane. Its pathway is secondary metabolite biosynthesis. Its function is as follows. Cytochrome P450 monooxygenase; part of the cluster that mediates the biosynthesis of a highly modified cyclo-arginine-tryptophan dipeptide (cRW). The first step of the pathway is perfornmed by the arginine-containing cyclodipeptide synthase (RCPDS) avaA that acts as the scaffold-generating enzyme and is responsible for formation of the cyclo-Arg-Trp (cRW) diketopiperazine. AvaB then acts as a multifunctional flavoenzyme that is responsible for generating the cyclo-Arg-formylkynurenine DKP, which can be deformylated by avaC. AvaB then further catalyzes an additional N-oxidation followed by cyclization and dehydration. The next step is an N-acetylation of the guanidine group catalyzed by the arginine N-acetyltransferase avaD. The roles of the additional enzymes identified within the ava cluster still have to be determined. This is Cytochrome P450 monooxygenase avaL from Aspergillus versicolor.